The primary structure comprises 25 residues: Plasticin-L1 (25 aa).

This sequence belongs to the frog skin active peptide (FSAP) family. Plasticin subfamily. Expressed by the skin glands.

It is found in the secreted. The protein localises to the target cell membrane. In terms of biological role, may play an immunomodulatory role in frog skin in response to microbial pathogens, since it increases the production of the pro-inflammatory cytokines TNF-alpha, IL-1 beta, IL-12, and IL-23 by mouse peritoneal macrophages and has no effect on the production of the anti-inflammatory cytokine IL-10. It is not known whether stimulation of cytokine production arises from a non-specific interaction of the peptide with the macrophage membrane or from interaction with a specific receptor. Shows a low activity in stimulating insulin release from rat BRIN-BD11 beta cells, and acts without loss of integrity of the plasma membrane. Shows a marked affinity for both neutral and anionic membranes models. Does not show antibacterial (E.coli and S.aureus). Does not show hemolytic activity against human erythrocytes. This chain is Plasticin-L1, found in Leptodactylus laticeps (Santa Fe frog).